Consider the following 554-residue polypeptide: 3-(3-hydroxy-phenyl)propionate/3-hydroxycinnamic acid hydroxylase (554 aa).

FAD-binding positions include 17-46 and 285-295; these read QVAI…VVEK and FRIDRVLLAGD.

The protein belongs to the PheA/TfdB FAD monooxygenase family. It depends on FAD as a cofactor.

It carries out the reaction 3-(3-hydroxyphenyl)propanoate + NADH + O2 + H(+) = 3-(2,3-dihydroxyphenyl)propanoate + NAD(+) + H2O. The enzyme catalyses (2E)-3-(3-hydroxyphenyl)prop-2-enoate + NADH + O2 + H(+) = (2E)-3-(2,3-dihydroxyphenyl)prop-2-enoate + NAD(+) + H2O. The protein operates within aromatic compound metabolism; 3-phenylpropanoate degradation. Its function is as follows. Catalyzes the insertion of one atom of molecular oxygen into position 2 of the phenyl ring of 3-(3-hydroxyphenyl)propionate (3-HPP) and hydroxycinnamic acid (3HCI). The sequence is that of 3-(3-hydroxy-phenyl)propionate/3-hydroxycinnamic acid hydroxylase from Escherichia coli O81 (strain ED1a).